The primary structure comprises 126 residues: Large ribosomal subunit protein bL12 (126 aa).

It belongs to the bacterial ribosomal protein bL12 family. Homodimer. Part of the ribosomal stalk of the 50S ribosomal subunit. Forms a multimeric L10(L12)X complex, where L10 forms an elongated spine to which 2 to 4 L12 dimers bind in a sequential fashion. Binds GTP-bound translation factors.

Functionally, forms part of the ribosomal stalk which helps the ribosome interact with GTP-bound translation factors. Is thus essential for accurate translation. This Trichlorobacter lovleyi (strain ATCC BAA-1151 / DSM 17278 / SZ) (Geobacter lovleyi) protein is Large ribosomal subunit protein bL12.